Reading from the N-terminus, the 1250-residue chain is Protein SSD1 (1250 aa).

Over residues Met-1–Thr-22 the composition is skewed to polar residues. The tract at residues Met-1–Gln-32 is disordered. At Ser-2 the chain carries N-acetylserine. Ser-40 is modified (phosphoserine). The segment at Thr-79–His-163 is disordered. Over residues Ser-84–Thr-94 the composition is skewed to polar residues. Residues Asn-124 to Asn-145 show a composition bias toward low complexity. Phosphoserine is present on residues Ser-164 and Ser-183. Over residues Gln-197 to Gln-208 the composition is skewed to polar residues. 3 disordered regions span residues Gln-197–Lys-338, Lys-418–Asp-443, and Ser-455–Glu-517. Phosphothreonine is present on Thr-227. Residues Asn-264–Asn-276 show a composition bias toward polar residues. The span at Gln-277–Pro-287 shows a compositional bias: low complexity. Phosphoserine is present on residues Ser-286 and Ser-322. The span at Ser-319–Gln-329 shows a compositional bias: polar residues. A compositionally biased stretch (polar residues) spans Ser-481–Lys-495. Ser-491 and Ser-492 each carry phosphoserine. Basic residues predominate over residues Gly-497 to Gln-510. One can recognise a CSD2 domain in the interval Ala-582 to Asn-657. Tyr-688 is modified (phosphotyrosine). The RNB domain maps to Asp-694–His-1015. One can recognise a DIS3L2 C-terminal domain in the interval Gly-1064–Ala-1148.

It belongs to the RNR ribonuclease family.

Can suppress the lethality due to deletion of SIT4, and partially the defects due to BCY1 disruption. Is implicated in the control of the cell cycle G1 phase. The sequence is that of Protein SSD1 (SSD1) from Saccharomyces cerevisiae (strain ATCC 204508 / S288c) (Baker's yeast).